The sequence spans 436 residues: Zinc finger protein 101 (436 aa).

In terms of domain architecture, KRAB spans 4-82 (VAFEDVAVNF…RKEGNEHRET (79 aa)). The segment at 102 to 124 (CKCSVCGKVFLRHSFLDRHMRAH) adopts a C2H2-type 1 zinc-finger fold. Residues 128–141 (KRSECGGEWRETPR) are compositionally biased toward basic and acidic residues. A disordered region spans residues 128 to 164 (KRSECGGEWRETPRKQKQHGKASISPSSGARRTVTPT). Residues 151–163 (ISPSSGARRTVTP) are compositionally biased toward polar residues. The C2H2-type 2 zinc-finger motif lies at 169-191 (YECKVCGKAFNSPNLFQIHQRTH). The C2H2-type 3; degenerate zinc-finger motif lies at 197–219 (YKCREIVRAFTVSSFFRKHGKMH). C2H2-type zinc fingers lie at residues 225-247 (YECK…VRTH), 253-276 (YKCK…IRSH), 282-304 (HQCQ…ERTH), 310-332 (YECQ…ERAH), 338-360 (YECN…KKTH), 366-388 (YECT…EMTH), and 394-416 (FDCK…ERTH).

It belongs to the krueppel C2H2-type zinc-finger protein family. As to expression, expressed in a variety of adult and fetal tissues.

Its subcellular location is the nucleus. Functionally, may be involved in transcriptional regulation. The chain is Zinc finger protein 101 (ZNF101) from Homo sapiens (Human).